The sequence spans 221 residues: Glutathione S-transferase (221 aa).

Residues 3 to 83 (GKPVLHYANT…YIAGKYNLYG (81 aa)) enclose the GST N-terminal domain. Residues Y9, K45, 54–55 (QV), and 67–68 (QT) contribute to the glutathione site. One can recognise a GST C-terminal domain in the interval 85–208 (DLKERALIDM…QPGSQRKPRL (124 aa)).

This sequence belongs to the GST superfamily. Alpha family. In terms of assembly, homodimer or heterodimer of GSTA1 and GSTA2.

It catalyses the reaction RX + glutathione = an S-substituted glutathione + a halide anion + H(+). It carries out the reaction prostaglandin A2 + glutathione = prostaglandin A2-S-(R)-glutathione. The catalysed reaction is prostaglandin J2 + glutathione = prostaglandin J2-S-(R)-glutathione. The enzyme catalyses (13S)-hydroperoxy-(9Z,11E)-octadecadienoate + 2 glutathione = (13S)-hydroxy-(9Z,11E)-octadecadienoate + glutathione disulfide + H2O. It catalyses the reaction androst-5-ene-3,17-dione = androst-4-ene-3,17-dione. Glutathione S-transferase that catalyzes the nucleophilic attack of the sulfur atom of glutathione on the electrophilic groups of a wide range of exogenous and endogenous compounds. Involved in the formation of glutathione conjugates of both prostaglandin A2 (PGA2) and prostaglandin J2 (PGJ2). It also catalyzes the isomerization of D5-androstene-3,17-dione (AD) into D4-androstene-3,17-dione and may therefore play an important role in hormone biosynthesis. Through its glutathione-dependent peroxidase activity toward the fatty acid hydroperoxide (13S)-hydroperoxy-(9Z,11E)-octadecadienoate/13-HPODE it is also involved in the metabolism of oxidized linoleic acid. This is Glutathione S-transferase from Gallus gallus (Chicken).